Here is a 100-residue protein sequence, read N- to C-terminus: Small ribosomal subunit protein uS14c (100 aa).

Belongs to the universal ribosomal protein uS14 family. Part of the 30S ribosomal subunit.

The protein resides in the plastid. The protein localises to the chloroplast. Its function is as follows. Binds 16S rRNA, required for the assembly of 30S particles. The sequence is that of Small ribosomal subunit protein uS14c from Pyropia yezoensis (Susabi-nori).